Here is a 187-residue protein sequence, read N- to C-terminus: Dirigent protein 23 (187 aa).

The N-terminal stretch at 1 to 24 is a signal peptide; the sequence is MAKEEYVSRMLVMLIMIMPLVAQG. Asparagine 182 carries an N-linked (GlcNAc...) asparagine glycan.

The protein belongs to the plant dirigent protein family. Homodimer.

It is found in the secreted. The protein resides in the extracellular space. It localises to the apoplast. Functionally, dirigent proteins impart stereoselectivity on the phenoxy radical-coupling reaction, yielding optically active lignans from two molecules of coniferyl alcohol in the biosynthesis of lignans, flavonolignans, and alkaloids and thus plays a central role in plant secondary metabolism. This chain is Dirigent protein 23 (DIR23), found in Arabidopsis thaliana (Mouse-ear cress).